The chain runs to 374 residues: Alanine racemase (374 aa).

Lys-40 acts as the Proton acceptor; specific for D-alanine in catalysis. At Lys-40 the chain carries N6-(pyridoxal phosphate)lysine. Arg-139 provides a ligand contact to substrate. Catalysis depends on Tyr-261, which acts as the Proton acceptor; specific for L-alanine. A substrate-binding site is contributed by Met-309.

Belongs to the alanine racemase family. It depends on pyridoxal 5'-phosphate as a cofactor.

It catalyses the reaction L-alanine = D-alanine. It participates in amino-acid biosynthesis; D-alanine biosynthesis; D-alanine from L-alanine: step 1/1. Catalyzes the interconversion of L-alanine and D-alanine. May also act on other amino acids. In Rhodospirillum rubrum (strain ATCC 11170 / ATH 1.1.1 / DSM 467 / LMG 4362 / NCIMB 8255 / S1), this protein is Alanine racemase (alr).